Here is a 322-residue protein sequence, read N- to C-terminus: Phosphatidylserine decarboxylase proenzyme (322 aa).

Catalysis depends on charge relay system; for autoendoproteolytic cleavage activity residues Asp90, His147, and Ser254. The active-site Schiff-base intermediate with substrate; via pyruvic acid; for decarboxylase activity is the Ser254. Residue Ser254 is modified to Pyruvic acid (Ser); by autocatalysis. The disordered stretch occupies residues 295 to 322 (VEPAPLPTEEIKAEHDASPLVDNKKDDT). Residues 303 to 322 (EEIKAEHDASPLVDNKKDDT) show a composition bias toward basic and acidic residues.

This sequence belongs to the phosphatidylserine decarboxylase family. PSD-B subfamily. Prokaryotic type I sub-subfamily. As to quaternary structure, heterodimer of a large membrane-associated beta subunit and a small pyruvoyl-containing alpha subunit. Requires pyruvate as cofactor. In terms of processing, is synthesized initially as an inactive proenzyme. Formation of the active enzyme involves a self-maturation process in which the active site pyruvoyl group is generated from an internal serine residue via an autocatalytic post-translational modification. Two non-identical subunits are generated from the proenzyme in this reaction, and the pyruvate is formed at the N-terminus of the alpha chain, which is derived from the carboxyl end of the proenzyme. The autoendoproteolytic cleavage occurs by a canonical serine protease mechanism, in which the side chain hydroxyl group of the serine supplies its oxygen atom to form the C-terminus of the beta chain, while the remainder of the serine residue undergoes an oxidative deamination to produce ammonia and the pyruvoyl prosthetic group on the alpha chain. During this reaction, the Ser that is part of the protease active site of the proenzyme becomes the pyruvoyl prosthetic group, which constitutes an essential element of the active site of the mature decarboxylase.

It is found in the cell membrane. The enzyme catalyses a 1,2-diacyl-sn-glycero-3-phospho-L-serine + H(+) = a 1,2-diacyl-sn-glycero-3-phosphoethanolamine + CO2. Its pathway is phospholipid metabolism; phosphatidylethanolamine biosynthesis; phosphatidylethanolamine from CDP-diacylglycerol: step 2/2. In terms of biological role, catalyzes the formation of phosphatidylethanolamine (PtdEtn) from phosphatidylserine (PtdSer). The polypeptide is Phosphatidylserine decarboxylase proenzyme (Salmonella agona (strain SL483)).